Consider the following 68-residue polypeptide: uncharacterized protein (68 aa).

To B.subtilis XtrA.

This is an uncharacterized protein from Bacillus subtilis (strain 168).